The sequence spans 298 residues: Probable endonuclease 4 (298 aa).

9 residues coordinate Zn(2+): His-69, His-110, Glu-145, Asp-179, His-182, His-214, Asp-227, His-229, and Glu-259.

It belongs to the AP endonuclease 2 family. Requires Zn(2+) as cofactor.

It carries out the reaction Endonucleolytic cleavage to 5'-phosphooligonucleotide end-products.. In terms of biological role, endonuclease IV plays a role in DNA repair. It cleaves phosphodiester bonds at apurinic or apyrimidinic (AP) sites, generating a 3'-hydroxyl group and a 5'-terminal sugar phosphate. The sequence is that of Probable endonuclease 4 from Geobacillus sp. (strain WCH70).